The primary structure comprises 369 residues: Peptide chain release factor 2 (369 aa).

Gln-252 is modified (N5-methylglutamine).

Belongs to the prokaryotic/mitochondrial release factor family. In terms of processing, methylated by PrmC. Methylation increases the termination efficiency of RF2.

Its subcellular location is the cytoplasm. Peptide chain release factor 2 directs the termination of translation in response to the peptide chain termination codons UGA and UAA. This chain is Peptide chain release factor 2, found in Staphylococcus aureus (strain MRSA252).